We begin with the raw amino-acid sequence, 467 residues long: UDP-N-acetylmuramoylalanine--D-glutamate ligase (467 aa).

ATP is bound at residue 121-127 (GTNGKST).

The protein belongs to the MurCDEF family.

It localises to the cytoplasm. It catalyses the reaction UDP-N-acetyl-alpha-D-muramoyl-L-alanine + D-glutamate + ATP = UDP-N-acetyl-alpha-D-muramoyl-L-alanyl-D-glutamate + ADP + phosphate + H(+). It functions in the pathway cell wall biogenesis; peptidoglycan biosynthesis. Cell wall formation. Catalyzes the addition of glutamate to the nucleotide precursor UDP-N-acetylmuramoyl-L-alanine (UMA). This Brucella abortus (strain 2308) protein is UDP-N-acetylmuramoylalanine--D-glutamate ligase.